A 335-amino-acid chain; its full sequence is Transmembrane protein 120B-B (335 aa).

Residues 1 to 39 (MSLQKCQEEWGELEKEFQQLQETHKVYKQKLEELSSLQN) are a coiled coil. A run of 6 helical transmembrane segments spans residues 100 to 116 (SLYL…TLLS), 130 to 150 (FKLY…FVLH), 157 to 177 (VFNF…SILI), 193 to 213 (VSTF…YQMF), 268 to 288 (FLLP…MTLF), and 300 to 320 (QVFV…LTTL).

It belongs to the TMEM120 family.

Its subcellular location is the nucleus inner membrane. Functionally, necessary for efficient adipogenesis. Does not show ion channel activity. The chain is Transmembrane protein 120B-B (tmem120b-b) from Xenopus laevis (African clawed frog).